The primary structure comprises 115 residues: MASPVVSLLLVGICALAFVHVARSECCTSRELVEFKMDRGDCEAVRAIENYPNGCEVTICADGVAQLGAYCGQGSCNIFGCNCDGGCLSGDWSQEFVRRNQQYGIQIIKVTRLPF.

Residues 1 to 24 form the signal peptide; the sequence is MASPVVSLLLVGICALAFVHVARS. 5 disulfides stabilise this stretch: Cys26-Cys81, Cys27-Cys87, Cys42-Cys55, Cys60-Cys71, and Cys76-Cys83.

The protein belongs to the Diedel family. Detected in hemolymph (at protein level). Also expressed in the fat body and is probably synthesized in the fat body and secreted into the hemolymph.

The protein resides in the secreted. Functionally, cytokine which promotes survival following infection by Sindbis virus by suppressing the immune deficiency pathway. Following infection by the enteropathogenic bacteria E.carotovora limits intestinal stem cells proliferation. When secreted from muscle or adipose tissue, can attenuate age-related intestinal tissue degeneration by inhibiting apoptosis. This chain is Protein Diedel, found in Drosophila melanogaster (Fruit fly).